A 156-amino-acid chain; its full sequence is Small ribosomal subunit protein uS7 (156 aa).

It belongs to the universal ribosomal protein uS7 family. Part of the 30S ribosomal subunit. Contacts proteins S9 and S11.

Functionally, one of the primary rRNA binding proteins, it binds directly to 16S rRNA where it nucleates assembly of the head domain of the 30S subunit. Is located at the subunit interface close to the decoding center, probably blocks exit of the E-site tRNA. In Cutibacterium acnes (strain DSM 16379 / KPA171202) (Propionibacterium acnes), this protein is Small ribosomal subunit protein uS7.